The chain runs to 34 residues: Photosystem II reaction center protein M (34 aa).

Residues 5–25 (ILGLTATALFIIIPTSFLLIL) form a helical membrane-spanning segment.

It belongs to the PsbM family. In terms of assembly, PSII is composed of 1 copy each of membrane proteins PsbA, PsbB, PsbC, PsbD, PsbE, PsbF, PsbH, PsbI, PsbJ, PsbK, PsbL, PsbM, PsbT, PsbX, PsbY, PsbZ, Psb30/Ycf12, at least 3 peripheral proteins of the oxygen-evolving complex and a large number of cofactors. It forms dimeric complexes.

Its subcellular location is the plastid. It localises to the chloroplast thylakoid membrane. In terms of biological role, one of the components of the core complex of photosystem II (PSII). PSII is a light-driven water:plastoquinone oxidoreductase that uses light energy to abstract electrons from H(2)O, generating O(2) and a proton gradient subsequently used for ATP formation. It consists of a core antenna complex that captures photons, and an electron transfer chain that converts photonic excitation into a charge separation. This subunit is found at the monomer-monomer interface. The sequence is that of Photosystem II reaction center protein M from Stigeoclonium helveticum (Green alga).